A 521-amino-acid polypeptide reads, in one-letter code: MPRGFLVKRSKKSTPVSYRVRGGEDSDRALLLSPGCGGARAEPPVPSPGPLPPPPPPALAERAHAALAAALACAPGPPPPPPPGPRAAHFGNPEAAHPAPLYSPTRPVSREHEKHKYFERSFNLGSPVSAESFPTPAALLAGGGSGANGAGGGGGGTCGGDALLFAPAELKMGTAFSAGAEAARGPGTGPPLSPAAALRPPGKRPAPPAAVATEPPAKAAKAPSAKKPKAIRKLHFEDEVTTSPVLGLKIKEGPVEAPRGRAGGATRPLGEFICQLCKEEYADPFALAQHKCSRIVRVEYRCPECAKVFSCPANLASHRRWHKPRPVPAAARAPEPEAATRAEAREAAGGGSSDRDTPSPGGVSESGSEDGLYECHHCAKKFRRQAYLRKHLLAHHQALQAKGAPPPPPPPPPPAEDILAFYAGPDEKAPQEASGDGEAAGVLGLSATAQCHLCPVCGETFPSKGAQERHLRLLHAAQVFPCKYCPATFYSSPGLTRHINKCHPSENRQVILLQVPVRPAC.

Over residues 1-12 (MPRGFLVKRSKK) the composition is skewed to basic residues. Positions 1–20 (MPRGFLVKRSKKSTPVSYRV) are SNAG domain. Disordered regions lie at residues 1–59 (MPRG…PPAL), 76–107 (GPPP…PTRP), and 180–230 (AEAA…KPKA). Positions 2-7 (PRGFLV) are required and sufficient for interaction with KDM1A. Residues 43–56 (PPVPSPGPLPPPPP) form a necessary for interaction with CCND1 region. 2 stretches are compositionally biased toward pro residues: residues 43–58 (PPVP…PPPA) and 76–85 (GPPPPPPPGP). The span at 209–223 (AAVATEPPAKAAKAP) shows a compositional bias: low complexity. The C2H2-type 1; atypical zinc-finger motif lies at 272–292 (FICQLCKEEYADPFALAQHKC). The C2H2-type 2 zinc finger occupies 300-322 (YRCPECAKVFSCPANLASHRRWH). Residues 320-369 (RWHKPRPVPAAARAPEPEAATRAEAREAAGGGSSDRDTPSPGGVSESGSE) form a disordered region. Residues 334 to 346 (PEPEAATRAEARE) are compositionally biased toward basic and acidic residues. A C2H2-type 3 zinc finger spans residues 373–395 (YECHHCAKKFRRQAYLRKHLLAH). A disordered region spans residues 398 to 419 (ALQAKGAPPPPPPPPPPAEDIL). A compositionally biased stretch (pro residues) spans 404 to 415 (APPPPPPPPPPA). 2 C2H2-type zinc fingers span residues 452-475 (HLCP…RLLH) and 480-503 (FPCK…NKCH).

It belongs to the INSM1 family. In terms of assembly, interacts (via the N-terminal region) with CCND1 (via cyclin N-terminal domain); the interaction competes with the binding of CCND1 to CDK4 during cell cycle progression and increases its transcriptional repressor activity. Interacts with HDAC3; the interaction increases its transcriptional repressor activity. Interacts (via the SNAG domain) with HDAC1. Interacts (via the SNAG domain) with HDAC2. Interacts (via the SNAG domain) with KDM1A. Interacts (via the SNAG domain) with RCOR1. Interacts with SORBS1. As to expression, expressed in adrenal gland. Expressed in the dentate gyrus of the hippocampus and the wall of the lateral ventricle. Expressed in pancreatic and intestinal endocrine cells.

It localises to the nucleus. In terms of biological role, sequence-specific DNA-binding transcriptional regulator that plays a key role in neurogenesis and neuroendocrine cell differentiation during embryonic and/or fetal development. Binds to the consensus sequence 5'-[TG][TC][TC][TT][GA]GGG[CG]A-3' in target promoters. Acts as a transcriptional repressor of NEUROD1 and INS expression via its interaction with cyclin CCND1 in a cell cycle-independent manner. Negatively regulates skeletal muscle-specific gene expression in endocrine cells of the pituitary by inhibiting the Notch signaling pathway. Represses target gene transcription by recruiting chromatin-modifying factors, such as HDAC1, HDAC2, HDAC3, KDM1A and RCOR1 histone deacetylases. Binds to its own promoter, suggesting autoregulation as a self-control feedback mechanism. Competes with histone H3 for the same binding site on the histone demethylase complex formed by KDM1A and RCOR1, and thereby inhibits demethylation of histone H3 at 'Lys-4'. Promotes the generation and expansion of neuronal basal progenitor cells in the developing neocortex. Involved in the differentiation of endocrine cells of the developing anterior pituitary gland, of the pancreas and intestine, and of sympatho-adrenal cells in the peripheral nervous system. Promotes cell cycle signaling arrest and inhibition of cellular proliferation. This Mus musculus (Mouse) protein is Insulinoma-associated protein 1 (Insm1).